The primary structure comprises 1236 residues: MVHPVQVGKRTRMSFSKIKEVCEMSNLIEVQLDSYEWFLQEGLQEVFDDINPIQDYTGNLSLEFVGYKLDMENIKYSVEECKERDATYAAPLKVSVRLINKETGEIKEQDVFMGDFPLMTEQGTFIINGAERVIVSQLVRSPGVYYDVSLDKSGKELFSATVIPNRGAWLEYETDSNDIIYVRIDKTRKLPISILIRALEYGSDLEIIDYFGEDERLKASIEKDNTKTKEEALLEIYKRLRPGEPPTVDSAMSLIGSLFFDAKRYDLSRVGRYKFNKKLALHLRIANQISAQDIVNPATGEIVVQEGEKIDRDKAIEIQNSGINSVDIQLDDKVLRVIGNNFVDIKSFVKFDIDDLNIKEYVHYPTLKEILDNYSDEEMIKEQIKKNINVLIPKHIIRDDIMSTISYEIGLPYGIGYTDDIDHLGNRRLRSVGELLQNQFRIGLSRMERVVKERMTIQDQDSITPQALINIRPVTASIKEFFGSSQLSQFMDQTNPLSELTHKRRLSALGPGGLSRERAGFEVRDVHHSHYGRMCPIETPEGPNIGLINSLATYAKVNEYGFIETPYRKVDKATGVVTHDIIYMTADEEDHYLIAKANEILNDDGTFIDDKITVRDQEDVLVVPKEEVDFMDVSPRQLVSVATAMIPFLENDDASRALMGSNMQRQAVPLLKPEAPIVGTGIEYKAAVDSAVLPKAKKPGVVTYVSASEIRVKKDKPDSNGDVDKYKLLKFKRSNQGTCINQKPLVSKGDKVDTKTVLADGPSTDLGEIALGKNIRMGFITWEGYNYEDAMLISEELVREDVFTSIHIEEYEAEARDTKLGPEEITRDIPNVGEDALKDIDERGIIRIGAEVRSGDILVGKVTPKGETELTAEERLLRAIFGEKAREVRDTSLRVPHGEAGIIVDVKVFTRENGDELSPGVNKLVRCYIAQKRKISVGDKMAGRHGNKGVISRVLPEEDMPFLPDGRPLQICLNPLGVPSRMNIGQVLEVHLGLAASKLGWHVATPVFDGATEPEIVECLEKAGYEGDGKTVLYDGRTGEPFDNRVTVGYMYILKLAHLVDDKIHARSTGPYSLVTQQPLGGKAQFGGQRFGEMEVWALEAYGAAHTLQEILTVKSDDVVGRVKTYEAIVKGENIPEPGVPESFKVLIKELQALCLDVKVLNDDNEEIAIKELADDDMVELEVNIEGSEDYTEPKQPNDNYLEEEENKDKESDYDEDLNFDDLTKGLQLDDFNDEH.

Residues 1185 to 1236 form a disordered region; that stretch reads IEGSEDYTEPKQPNDNYLEEEENKDKESDYDEDLNFDDLTKGLQLDDFNDEH. The segment covering 1201 to 1220 has biased composition (acidic residues); the sequence is YLEEEENKDKESDYDEDLNF.

Belongs to the RNA polymerase beta chain family. In terms of assembly, the RNAP catalytic core consists of 2 alpha, 1 beta, 1 beta' and 1 omega subunit. When a sigma factor is associated with the core the holoenzyme is formed, which can initiate transcription.

It catalyses the reaction RNA(n) + a ribonucleoside 5'-triphosphate = RNA(n+1) + diphosphate. In terms of biological role, DNA-dependent RNA polymerase catalyzes the transcription of DNA into RNA using the four ribonucleoside triphosphates as substrates. The polypeptide is DNA-directed RNA polymerase subunit beta (Clostridium tetani (strain Massachusetts / E88)).